Consider the following 147-residue polypeptide: D-aminoacyl-tRNA deacylase (147 aa).

The Gly-cisPro motif, important for rejection of L-amino acids signature appears at 136 to 137 (GP).

It belongs to the DTD family. In terms of assembly, homodimer.

The protein resides in the cytoplasm. It catalyses the reaction glycyl-tRNA(Ala) + H2O = tRNA(Ala) + glycine + H(+). The enzyme catalyses a D-aminoacyl-tRNA + H2O = a tRNA + a D-alpha-amino acid + H(+). Functionally, an aminoacyl-tRNA editing enzyme that deacylates mischarged D-aminoacyl-tRNAs. Also deacylates mischarged glycyl-tRNA(Ala), protecting cells against glycine mischarging by AlaRS. Acts via tRNA-based rather than protein-based catalysis; rejects L-amino acids rather than detecting D-amino acids in the active site. By recycling D-aminoacyl-tRNA to D-amino acids and free tRNA molecules, this enzyme counteracts the toxicity associated with the formation of D-aminoacyl-tRNA entities in vivo and helps enforce protein L-homochirality. The protein is D-aminoacyl-tRNA deacylase of Streptococcus pneumoniae serotype 2 (strain D39 / NCTC 7466).